The following is a 468-amino-acid chain: 6-phospho-beta-galactosidase (468 aa).

D-galactose 6-phosphate contacts are provided by Gln19, His116, Asn159, Glu160, and Asn297. Glu160 functions as the Proton donor in the catalytic mechanism. The active-site Nucleophile is Glu375. The D-galactose 6-phosphate site is built by Ser428, Trp429, Lys435, and Tyr437.

This sequence belongs to the glycosyl hydrolase 1 family.

The catalysed reaction is a 6-phospho-beta-D-galactoside + H2O = D-galactose 6-phosphate + an alcohol. It participates in carbohydrate metabolism; lactose degradation; D-galactose 6-phosphate and beta-D-glucose from lactose 6-phosphate: step 1/1. The protein is 6-phospho-beta-galactosidase of Streptococcus gordonii (strain Challis / ATCC 35105 / BCRC 15272 / CH1 / DL1 / V288).